The primary structure comprises 208 residues: Outer-membrane lipoprotein carrier protein (208 aa).

An N-terminal signal peptide occupies residues 1–23; sequence MKKTVKNLTALLTLALAAPWALA.

Belongs to the LolA family. Monomer.

The protein resides in the periplasm. Participates in the translocation of lipoproteins from the inner membrane to the outer membrane. Only forms a complex with a lipoprotein if the residue after the N-terminal Cys is not an aspartate (The Asp acts as a targeting signal to indicate that the lipoprotein should stay in the inner membrane). This Actinobacillus succinogenes (strain ATCC 55618 / DSM 22257 / CCUG 43843 / 130Z) protein is Outer-membrane lipoprotein carrier protein.